The primary structure comprises 290 residues: Serpentine receptor class U-26 (290 aa).

7 consecutive transmembrane segments (helical) span residues leucine 31–leucine 51, leucine 70–leucine 90, phenylalanine 112–valine 134, phenylalanine 158–isoleucine 178, alanine 185–valine 205, asparagine 213–isoleucine 233, and methionine 262–valine 282.

It belongs to the nematode receptor-like protein sru family.

It localises to the membrane. The polypeptide is Serpentine receptor class U-26 (sru-26) (Caenorhabditis elegans).